Here is a 117-residue protein sequence, read N- to C-terminus: Large ribosomal subunit protein bL19 (117 aa).

The protein belongs to the bacterial ribosomal protein bL19 family.

In terms of biological role, this protein is located at the 30S-50S ribosomal subunit interface and may play a role in the structure and function of the aminoacyl-tRNA binding site. This chain is Large ribosomal subunit protein bL19, found in Leptothrix cholodnii (strain ATCC 51168 / LMG 8142 / SP-6) (Leptothrix discophora (strain SP-6)).